Here is a 622-residue protein sequence, read N- to C-terminus: DNA polymerase II small subunit (622 aa).

A disordered region spans residues 76 to 113 (ISTGEGSQKVPDHEELEKITNESSVESSISTGETPKTE). Positions 85–95 (VPDHEELEKIT) are enriched in basic and acidic residues. Residues 96-109 (NESSVESSISTGET) are compositionally biased toward polar residues.

It belongs to the DNA polymerase delta/II small subunit family. As to quaternary structure, heterodimer of a large subunit and a small subunit.

The enzyme catalyses DNA(n) + a 2'-deoxyribonucleoside 5'-triphosphate = DNA(n+1) + diphosphate. It catalyses the reaction Exonucleolytic cleavage in the 3'- to 5'-direction to yield nucleoside 5'-phosphates.. Its function is as follows. Possesses two activities: a DNA synthesis (polymerase) and an exonucleolytic activity that degrades single-stranded DNA in the 3' to 5' direction. Has a template-primer preference which is characteristic of a replicative DNA polymerase. This Pyrococcus horikoshii (strain ATCC 700860 / DSM 12428 / JCM 9974 / NBRC 100139 / OT-3) protein is DNA polymerase II small subunit (polB).